The sequence spans 753 residues: Protein transport protein SEC23-1 (753 aa).

Zn(2+)-binding residues include C56, C61, C80, and C83.

This sequence belongs to the SEC23/SEC24 family. SEC23 subfamily. As to quaternary structure, the COPII coat is composed of at least 5 proteins: the SEC23/24 complex, the SEC13/31 complex, and the protein SAR1.

It localises to the cytoplasm. The protein localises to the cytoplasmic vesicle. The protein resides in the COPII-coated vesicle membrane. Its subcellular location is the endoplasmic reticulum membrane. It is found in the golgi apparatus membrane. In terms of biological role, component of the coat protein complex II (COPII) which promotes the formation of transport vesicles from the endoplasmic reticulum (ER). The coat has two main functions, the physical deformation of the endoplasmic reticulum membrane into vesicles and the selection of cargo molecules. The polypeptide is Protein transport protein SEC23-1 (SEC231) (Candida glabrata (strain ATCC 2001 / BCRC 20586 / JCM 3761 / NBRC 0622 / NRRL Y-65 / CBS 138) (Yeast)).